Reading from the N-terminus, the 406-residue chain is Linalool 8-monooxygenase (406 aa).

Residue cysteine 355 participates in heme binding.

Belongs to the cytochrome P450 family. Heme serves as cofactor.

The catalysed reaction is linalool + 2 reduced [NADPH--hemoprotein reductase] + 2 O2 = (6E)-8-oxolinalool + 2 oxidized [NADPH--hemoprotein reductase] + 3 H2O + 2 H(+). Its pathway is terpene metabolism; linalool degradation. In terms of biological role, catalyzes the 8-methyl hydroxylation of linalool. The protein is Linalool 8-monooxygenase (linC) of Pseudomonas putida (Arthrobacter siderocapsulatus).